The sequence spans 231 residues: Probable septum site-determining protein MinC (231 aa).

Belongs to the MinC family. In terms of assembly, interacts with MinD and FtsZ.

Functionally, cell division inhibitor that blocks the formation of polar Z ring septums. Rapidly oscillates between the poles of the cell to destabilize FtsZ filaments that have formed before they mature into polar Z rings. Prevents FtsZ polymerization. The polypeptide is Probable septum site-determining protein MinC (Bradyrhizobium diazoefficiens (strain JCM 10833 / BCRC 13528 / IAM 13628 / NBRC 14792 / USDA 110)).